We begin with the raw amino-acid sequence, 368 residues long: tRNA 2-selenouridine synthase (368 aa).

Positions 15 to 138 (FLNQHPIMDV…MRQYLIGVIE (124 aa)) constitute a Rhodanese domain. Catalysis depends on C98, which acts as the S-selanylcysteine intermediate.

This sequence belongs to the SelU family. In terms of assembly, monomer.

It catalyses the reaction 5-methylaminomethyl-2-thiouridine(34) in tRNA + selenophosphate + (2E)-geranyl diphosphate + H2O + H(+) = 5-methylaminomethyl-2-selenouridine(34) in tRNA + (2E)-thiogeraniol + phosphate + diphosphate. The enzyme catalyses 5-methylaminomethyl-2-thiouridine(34) in tRNA + (2E)-geranyl diphosphate = 5-methylaminomethyl-S-(2E)-geranyl-thiouridine(34) in tRNA + diphosphate. It carries out the reaction 5-methylaminomethyl-S-(2E)-geranyl-thiouridine(34) in tRNA + selenophosphate + H(+) = 5-methylaminomethyl-2-(Se-phospho)selenouridine(34) in tRNA + (2E)-thiogeraniol. The catalysed reaction is 5-methylaminomethyl-2-(Se-phospho)selenouridine(34) in tRNA + H2O = 5-methylaminomethyl-2-selenouridine(34) in tRNA + phosphate. Functionally, involved in the post-transcriptional modification of the uridine at the wobble position (U34) of tRNA(Lys), tRNA(Glu) and tRNA(Gln). Catalyzes the conversion of 2-thiouridine (S2U-RNA) to 2-selenouridine (Se2U-RNA). Acts in a two-step process involving geranylation of 2-thiouridine (S2U) to S-geranyl-2-thiouridine (geS2U) and subsequent selenation of the latter derivative to 2-selenouridine (Se2U) in the tRNA chain. The protein is tRNA 2-selenouridine synthase of Shewanella baltica (strain OS155 / ATCC BAA-1091).